The sequence spans 202 residues: Zinc metalloproteinase barnettlysin-1 (202 aa).

Residues 6–200 (RYVELFIVVD…MKENPQCILN (195 aa)) form the Peptidase M12B domain. Residues E9 and D93 each coordinate Ca(2+). 3 disulfide bridges follow: C117–C197, C157–C181, and C159–C164. H142 contacts Zn(2+). Residue E143 is part of the active site. Zn(2+)-binding residues include H146 and H152. C197 and N200 together coordinate Ca(2+).

Monomer. Requires Zn(2+) as cofactor. Expressed by the venom gland.

Its subcellular location is the secreted. Its function is as follows. Non-hemorrhagic metalloproteinase that hydrolyzes the alpha chains of fibrinogen and fibrin but has no activity on beta- and gamma-chains. Cleaves X-Leu bonds. Inhibits platelet aggregation induced by the von Willebrand factor (VWF) (IC(50) is 1.4 uM) and type I collagen (IC(50) is 3.2 uM). Acts by cleaving the vWF and its receptor GPIb, and by cleaving the collagen-binding Alpha-2A domain of the collagen receptor alpha-2/beta-1 integrin (ITGA2/ITGB1). Also degrades the extracellular matrix protein fibronectin (FN1), but has no effect on laminin and type I collagen. This is Zinc metalloproteinase barnettlysin-1 from Bothrops barnetti (Barnett's lancehead).